A 319-amino-acid polypeptide reads, in one-letter code: 4-diphosphocytidyl-2-C-methyl-D-erythritol kinase (319 aa).

Lys-21 is a catalytic residue. Residue 106–116 (PIGAGLAGGSS) participates in ATP binding. Asp-148 is a catalytic residue.

Belongs to the GHMP kinase family. IspE subfamily.

The catalysed reaction is 4-CDP-2-C-methyl-D-erythritol + ATP = 4-CDP-2-C-methyl-D-erythritol 2-phosphate + ADP + H(+). It functions in the pathway isoprenoid biosynthesis; isopentenyl diphosphate biosynthesis via DXP pathway; isopentenyl diphosphate from 1-deoxy-D-xylulose 5-phosphate: step 3/6. Its function is as follows. Catalyzes the phosphorylation of the position 2 hydroxy group of 4-diphosphocytidyl-2C-methyl-D-erythritol. This chain is 4-diphosphocytidyl-2-C-methyl-D-erythritol kinase, found in Prochlorococcus marinus (strain MIT 9313).